Consider the following 102-residue polypeptide: Cytochrome c-553 (102 aa).

The signal sequence occupies residues 1 to 23 (MKRILVVMSICAALAFGVSAAMA). The heme c site is built by Cys-33, Cys-36, His-37, and Met-80.

Post-translationally, binds 1 heme c group covalently per subunit.

It is found in the periplasm. Natural electron acceptor for a formate dehydrogenase. In Nitratidesulfovibrio vulgaris (strain DSM 19637 / Miyazaki F) (Desulfovibrio vulgaris), this protein is Cytochrome c-553.